Consider the following 356-residue polypeptide: Protein disulfide isomerase crld-1 (356 aa).

The N-terminal stretch at 1 to 17 (MSRILLLLAVLIGATSQ) is a signal peptide. At 18–299 (KEVTIKNEKC…DRPFMPIDQQ (282 aa)) the chain is on the lumenal side. Residues 27 to 30 (CRTC) carry the CXXC motif. Residues cysteine 27 and cysteine 30 are joined by a disulfide bond. The N-linked (GlcNAc...) asparagine glycan is linked to asparagine 122. The 39-residue stretch at 150–188 (GLSEKADVCFGKGSCHGDGSREGSGKCKCETGYTGNLCR) folds into the EGF-like 1 domain. Cystine bridges form between cysteine 158/cysteine 176, cysteine 178/cysteine 187, cysteine 245/cysteine 258, cysteine 251/cysteine 267, and cysteine 269/cysteine 281. The EGF-like 2; calcium-binding domain maps to 241 to 282 (DVNECQNESACTKEHEICVNTVGSFKCECKEGYKKDDEQNCQ). Asparagine 247 carries an N-linked (GlcNAc...) asparagine glycan. A helical transmembrane segment spans residues 300–317 (LKLIAFSSLIIIITFVVW). The Cytoplasmic segment spans residues 318–321 (HGSP). A helical transmembrane segment spans residues 322 to 341 (VLYVLTGITIVALILVDLYV). Residues 342–356 (NPDTIPDEAKRFLGY) lie on the Lumenal side of the membrane.

This sequence belongs to the CRELD family. Interacts with unc-29. In terms of tissue distribution, isoforms a: Widely expressed in tissues including body wall muscles, neurons, pharynx, hypodermis, seam cells, intestine and gonad. Isoform b: Widely expressed in tissues including body wall muscles, neurons, pharynx, hypodermis, seam cells, intestine and gonad.

Its subcellular location is the endoplasmic reticulum membrane. It localises to the endoplasmic reticulum lumen. It catalyses the reaction Catalyzes the rearrangement of -S-S- bonds in proteins.. Functionally, protein disulfide isomerase which associates with the unc-29 subunit of levamisole-sensitive nicotinic acetylcholine receptors (L-nAChR) to promote L-nAChR assembly in the endoplasmic reticulum at neuromuscular junctions. Its function is as follows. Promotes L-nAChR assembly in the endoplasmic reticulum at neuromuscular junctions. The protein is Protein disulfide isomerase crld-1 of Caenorhabditis elegans.